The sequence spans 138 residues: Ribosome-binding factor A (138 aa).

The tract at residues 119-138 (RSPEVQRDLGPSNEKDDEQN) is disordered.

It belongs to the RbfA family. In terms of assembly, monomer. Binds 30S ribosomal subunits, but not 50S ribosomal subunits or 70S ribosomes.

Its subcellular location is the cytoplasm. Its function is as follows. One of several proteins that assist in the late maturation steps of the functional core of the 30S ribosomal subunit. Associates with free 30S ribosomal subunits (but not with 30S subunits that are part of 70S ribosomes or polysomes). Required for efficient processing of 16S rRNA. May interact with the 5'-terminal helix region of 16S rRNA. In Agrobacterium fabrum (strain C58 / ATCC 33970) (Agrobacterium tumefaciens (strain C58)), this protein is Ribosome-binding factor A.